The primary structure comprises 448 residues: MARKYFGTDGIRGRANGVITPELALKVGQAAGLVFQRGEYRHRVVIGKDTRLSGYMIETAMVAGFTSVGMDVLLLGPIPTPAVAMLTKSMRADLGVMISASHNPFADNGIKLFGPSGYKLSDEVELQIEELMDENIDRRLAQSTQLGRARRIDGVHDRYIEFAKRTLPRELSLEGLRVVVDCANGAAYKVVPEALWELGADVIAIGAEPDGMNINKECGSTSPDALAHKVREMRADIGIALDGDADRVLMIDERGHLIDGDQLLAVIAQSWKEDGRLAKPGIVTTVMSNLGLERFLAGEGLSMVRTPVGDRYVLEQMMAQGYNLGGEPSGHIIMSDFTTTGDGFVAALQVLAVVQKLGRPVSEVCHRFEPLPQILKNVRYRSGKPLENPKVQSTIADAEKKLNGCGRLLVRSSGTEPVIRVMGEGDDRDRVEEAVDMIVAALSIGVAA.

The active-site Phosphoserine intermediate is the Ser101. Mg(2+)-binding residues include Ser101, Asp242, Asp244, and Asp246. The residue at position 101 (Ser101) is a Phosphoserine.

It belongs to the phosphohexose mutase family. Mg(2+) serves as cofactor. Post-translationally, activated by phosphorylation.

The catalysed reaction is alpha-D-glucosamine 1-phosphate = D-glucosamine 6-phosphate. Its function is as follows. Catalyzes the conversion of glucosamine-6-phosphate to glucosamine-1-phosphate. The polypeptide is Phosphoglucosamine mutase (Afipia carboxidovorans (strain ATCC 49405 / DSM 1227 / KCTC 32145 / OM5) (Oligotropha carboxidovorans)).